Reading from the N-terminus, the 86-residue chain is Acyl carrier protein (86 aa).

In terms of domain architecture, Carrier spans 7-85 (SKVDNIEQKV…DVVNYIKEHK (79 aa)). The residue at position 45 (Ser45) is an O-(pantetheine 4'-phosphoryl)serine.

The protein belongs to the acyl carrier protein (ACP) family. Post-translationally, 4'-phosphopantetheine is transferred from CoA to a specific serine of apo-ACP by AcpS. This modification is essential for activity because fatty acids are bound in thioester linkage to the sulfhydryl of the prosthetic group.

It is found in the cytoplasm. Its pathway is lipid metabolism; fatty acid biosynthesis. Its function is as follows. Carrier of the growing fatty acid chain in fatty acid biosynthesis. The sequence is that of Acyl carrier protein from Rickettsia bellii (strain RML369-C).